The primary structure comprises 399 residues: Mycinamicin VI 2''-O-methyltransferase (399 aa).

S-adenosyl-L-methionine-binding positions include Thr-173, 202-208 (EIGVGGY), Ser-217, Asp-234, 252-253 (DQ), and Asp-275. Position 275 (Asp-275) interacts with Mg(2+). His-278 functions as the Proton acceptor in the catalytic mechanism. Residues Glu-303 and Asp-304 each coordinate Mg(2+).

The protein belongs to the methyltransferase OleY/MycE family. Homotetramer. Mg(2+) is required as a cofactor.

It catalyses the reaction mycinamicin VI + S-adenosyl-L-methionine = mycinamicin III + S-adenosyl-L-homocysteine + H(+). It participates in antibiotic biosynthesis; mycinamicin biosynthesis. In terms of biological role, O-methyltransferase that catalyzes the conversion of mycinamicin VI to mycinamicin III in the biosynthesis of mycinamicin, a 16-membered macrolide antibiotic. This Micromonospora griseorubida protein is Mycinamicin VI 2''-O-methyltransferase (mycE).